The sequence spans 116 residues: MKTLVLLSALVLPCFQVQADPIQNTDEETKTEEQPEEEDQAVSVSFGGTEGSALQDVAQRRFPWCRKCRVCQKCQVCQKCPVCPTCPQCPKQPLCEERQNKTAITTQAPNTQHKGC.

Positions Met1–Ala19 are cleaved as a signal peptide. Residues Asp20–Arg60 constitute a propeptide that is removed on maturation. Positions Ile22–Val44 are disordered. Repeat copies occupy residues Cys65–Lys67, Cys68–Val70, Cys71–Lys73, Cys74–Val76, Cys77–Lys79, Cys80–Val82, Cys83–Thr85, Cys86–Gln88, and Cys89–Lys91. A 2 X 3 AA tandem repeats of C-R-X region spans residues Cys65 to Val70. Residues Cys71 to Lys79 form a 3 X 3 AA tandem repeats of C-Q-X region. The segment at Cys80–Lys91 is 4 X 3 AA tandem repeats of C-P-X.

The protein belongs to the alpha-defensin family. As to expression, small bowel.

The protein resides in the secreted. In terms of biological role, apparent precursor of a secreted, cationic, proline- and cysteine-rich peptide that contains Cys-Pro-Xaa repeats. Unlike cryptdin, the proposed mature peptide region lacks the structural motif characteristic of defensins. This is Alpha-defensin 29 from Mus musculus (Mouse).